Here is a 175-residue protein sequence, read N- to C-terminus: Interferon gamma (175 aa).

The N-terminal stretch at 1–23 (MNATCCILALLLCLTQAISGCYC) is a signal peptide. Gln24 is subject to Pyrrolidone carboxylic acid. N-linked (GlcNAc...) asparagine glycosylation is found at Asn39 and Asn106.

It belongs to the type II (or gamma) interferon family. In terms of assembly, homodimer. Interacts with IFNGR1 (via extracellular domain); this interaction promotes IFNGR1 dimerization. Released primarily from activated T lymphocytes.

The protein localises to the secreted. In terms of biological role, type II interferon produced by immune cells such as T-cells and NK cells that plays crucial roles in antimicrobial, antiviral, and antitumor responses by activating effector immune cells and enhancing antigen presentation. Primarily signals through the JAK-STAT pathway after interaction with its receptor IFNGR1 to affect gene regulation. Upon IFNG binding, IFNGR1 intracellular domain opens out to allow association of downstream signaling components JAK2, JAK1 and STAT1, leading to STAT1 activation, nuclear translocation and transcription of IFNG-regulated genes. Many of the induced genes are transcription factors such as IRF1 that are able to further drive regulation of a next wave of transcription. Plays a role in class I antigen presentation pathway by inducing a replacement of catalytic proteasome subunits with immunoproteasome subunits. In turn, increases the quantity, quality, and repertoire of peptides for class I MHC loading. Increases the efficiency of peptide generation also by inducing the expression of activator PA28 that associates with the proteasome and alters its proteolytic cleavage preference. Up-regulates as well MHC II complexes on the cell surface by promoting expression of several key molecules such as cathepsins B/CTSB, H/CTSH, and L/CTSL. Participates in the regulation of hematopoietic stem cells during development and under homeostatic conditions by affecting their development, quiescence, and differentiation. This chain is Interferon gamma (IFNG), found in Peromyscus maniculatus (North American deer mouse).